We begin with the raw amino-acid sequence, 177 residues long: Large ribosomal subunit protein uL6 (177 aa).

Positions 157–177 (YKGKGVRYAGEKVRRKEGKKK) are disordered.

This sequence belongs to the universal ribosomal protein uL6 family. In terms of assembly, part of the 50S ribosomal subunit.

In terms of biological role, this protein binds to the 23S rRNA, and is important in its secondary structure. It is located near the subunit interface in the base of the L7/L12 stalk, and near the tRNA binding site of the peptidyltransferase center. In Caulobacter vibrioides (strain ATCC 19089 / CIP 103742 / CB 15) (Caulobacter crescentus), this protein is Large ribosomal subunit protein uL6.